The chain runs to 75 residues: Conotoxin ar11a (75 aa).

The first 19 residues, methionine 1–glycine 19, serve as a signal peptide directing secretion. Residues glutamate 20–arginine 36 constitute a propeptide that is removed on maturation. Intrachain disulfides connect cysteine 39/cysteine 53, cysteine 46/cysteine 58, cysteine 52/cysteine 63, and cysteine 57/cysteine 70.

Expressed by the venom duct.

It localises to the secreted. Functionally, both natural (L-Leu form) and synthetic (D-Leu from) peptides equally cause sensitivity to touch and body tremor. Neither L-Leu form nor D-Leu form is active on nerve-muscle preparation. The protein is Conotoxin ar11a of Conus arenatus (Sand-dusted cone).